The primary structure comprises 178 residues: Cytochrome b6-f complex iron-sulfur subunit (178 aa).

The chain crosses the membrane as a helical span at residues L20–M42. A Rieske domain is found at K65–V161. Residues C107, H109, C125, and H128 each coordinate [2Fe-2S] cluster. A disulfide bridge links C112 with C127.

This sequence belongs to the Rieske iron-sulfur protein family. In terms of assembly, the 4 large subunits of the cytochrome b6-f complex are cytochrome b6, subunit IV (17 kDa polypeptide, PetD), cytochrome f and the Rieske protein, while the 4 small subunits are PetG, PetL, PetM and PetN. The complex functions as a dimer. It depends on [2Fe-2S] cluster as a cofactor.

The protein resides in the cellular thylakoid membrane. It catalyses the reaction 2 oxidized [plastocyanin] + a plastoquinol + 2 H(+)(in) = 2 reduced [plastocyanin] + a plastoquinone + 4 H(+)(out). Functionally, component of the cytochrome b6-f complex, which mediates electron transfer between photosystem II (PSII) and photosystem I (PSI), cyclic electron flow around PSI, and state transitions. The protein is Cytochrome b6-f complex iron-sulfur subunit of Prochlorococcus marinus (strain MIT 9215).